We begin with the raw amino-acid sequence, 498 residues long: Pre-glycoprotein polyprotein GP complex (498 aa).

Residue glycine 2 is the site of N-myristoyl glycine; by host attachment. The Extracellular segment spans residues 2-17 (GQIVTMFEALPHIIDE). The helical transmembrane segment at 18 to 33 (VINIVIIVLIIITSIK) threads the bilayer. Residues 34-58 (AVYNFATCGILALVSFLFLAGRSCG) are Cytoplasmic-facing. Cysteine 57 contacts Zn(2+). Residues 59–438 (MYGLNGPDIY…QGSTPLALMD (380 aa)) are Extracellular-facing. 5 N-linked (GlcNAc...) asparagine; by host glycosylation sites follow: asparagine 85, asparagine 95, asparagine 114, asparagine 124, and asparagine 171. 6 cysteine pairs are disulfide-bonded: cysteine 92–cysteine 239, cysteine 123–cysteine 160, cysteine 184–cysteine 220, cysteine 285–cysteine 298, cysteine 307–cysteine 316, and cysteine 370–cysteine 391. Asparagine 232 carries an N-linked (GlcNAc...) asparagine; by host glycan. N-linked (GlcNAc...) asparagine; by host glycosylation is found at asparagine 371, asparagine 396, and asparagine 401. Residues 439 to 459 (LLMFSTSAYLISIFLHFVRIP) traverse the membrane as a helical segment. Residues 460–498 (THRHIKGGSCPKPHRLTNKGICSCGAFKVPGVKTIWKRR) lie on the Cytoplasmic side of the membrane. Positions 461, 463, 469, 473, 481, and 483 each coordinate Zn(2+).

It belongs to the arenaviridae GPC protein family. In terms of assembly, interacts with glycoprotein G2. Part of the GP complex (GP-C) together with glycoprotein G1 and glycoprotein G2. The GP-complex interacts with protein Z, which interacts with ribonucleocapsid; these interactions may induce virion budding. As to quaternary structure, homotrimer; disulfide-linked. In pre-fusion state, G1 homotrimers bind G2 homotrimers via ionic interactions. Part of the GP complex (GP-C) together with glycoprotein G2 and the stable signal peptide. Interacts with the primary host receptor DAG1 on the cell surface. The GP-complex interacts with protein Z, which interacts with ribonucleocapsid; these interactions may induce virion budding. Homotrimer. Interacts with the stable signal peptide. In pre-fusion state, G2 homotrimers bind G1 homotrimers via ionic interactions. Part of the GP complex (GP-C) together with glycoprotein G1 and the stable signal peptide. Acidification in the endosome triggers rearrangements, which ultimately leads to a 6 helix bundle formed by the two heptad repeat domains (HR1 and HR2) in post-fusion state. The GP-complex interacts with protein Z, which interacts with ribonucleocapsid; these interactions may induce virion budding. In terms of processing, specific enzymatic cleavages in vivo yield mature proteins. GP-C polyprotein is cleaved in the endoplasmic reticulum by the host protease MBTPS1. Only cleaved glycoprotein is incorporated into virions. Post-translationally, the SSP remains stably associated with the GP complex following cleavage by signal peptidase and plays crucial roles in the trafficking of GP through the secretory pathway. Myristoylation is necessary for GP2-mediated fusion activity.

The protein resides in the virion membrane. Its subcellular location is the host endoplasmic reticulum membrane. It localises to the host Golgi apparatus membrane. It is found in the host cell membrane. Functions as a cleaved signal peptide that is retained as the third component of the GP complex (GP-C). Helps to stabilize the spike complex in its native conformation. The SSP is required for efficient glycoprotein expression, post-translational maturation cleavage of G1 and G2, glycoprotein transport to the cell surface plasma membrane, formation of infectious virus particles, and acid pH-dependent glycoprotein-mediated cell fusion. Its function is as follows. Forms the virion spikes together with glycoprotein G2. The glycoprotein spike trimers are connected to the underlying matrix. Interacts with the host receptor. Mediates virus attachment to the host primary receptor alpha-dystroglycan DAG1 (alpha-DG) at the cell surface. Down-modulates host DAG1. Functionally, forms the virion spikes together with glycoprotein G1. The glycoprotein spike trimers are connected to the underlying matrix. Class I viral fusion protein that directs fusion of viral and host endosomal membranes, leading to delivery of the nucleocapsid into the cytoplasm. Membrane fusion is mediated by irreversible conformational changes induced by acidification. The protein is Pre-glycoprotein polyprotein GP complex of Homo sapiens (Human).